Consider the following 450-residue polypeptide: Chromosomal replication initiator protein DnaA (450 aa).

Residues 1 to 84 form a domain I, interacts with DnaA modulators region; sequence MTENEQIFWN…AVDYVYEEDL (84 aa). Positions 84-109 are domain II; that stretch reads LIIEQQHQGQQGYTEQAFQQLPAVQS. The interval 110–328 is domain III, AAA+ region; that stretch reads DLNPKYSFDN…GALKDISLVA (219 aa). ATP is bound by residues G154, G156, K157, and T158. The domain IV, binds dsDNA stretch occupies residues 329–450; the sequence is NFKQIDTITV…EIETIKNKIK (122 aa).

Belongs to the DnaA family. As to quaternary structure, oligomerizes as a right-handed, spiral filament on DNA at oriC.

The protein resides in the cytoplasm. Plays an essential role in the initiation and regulation of chromosomal replication. ATP-DnaA binds to the origin of replication (oriC) to initiate formation of the DNA replication initiation complex once per cell cycle. Binds the DnaA box (a 9 base pair repeat at the origin) and separates the double-stranded (ds)DNA. Forms a right-handed helical filament on oriC DNA; dsDNA binds to the exterior of the filament while single-stranded (ss)DNA is stabiized in the filament's interior. The ATP-DnaA-oriC complex binds and stabilizes one strand of the AT-rich DNA unwinding element (DUE), permitting loading of DNA polymerase. After initiation quickly degrades to an ADP-DnaA complex that is not apt for DNA replication. Binds acidic phospholipids. This is Chromosomal replication initiator protein DnaA from Streptococcus equi subsp. zooepidemicus (strain MGCS10565).